We begin with the raw amino-acid sequence, 415 residues long: MSFLKEFDKDIFDLCEKELERQSNHLEMIASENFTLPAVMEAMGSVFTNKYAEGYPAKRYYGGCEYADGVEQLAIDRACKLFGCNYANVQPHSGSQANAAVYAALLKAGDKLLGMDLSHGGHLTHGSKPSFSGQNYSSFTYGVELDGRMNYDKILEIAKAVQPKIIVCGASAYAREIDFKKFREIADAVGAIMFADIAHVAGLVVAGEHMSPFPHAHVVTTTTHKTLAGPRGGMIMTNDEDIAKKINSAIFPGIQGGPLVHVIAAKAVGFKYNLSAEWKDYAVQVKANAKILGEVLVKRGYDLVSGGTDNHLVLLSFLNRDFSGKDADIALGNAGITVNKNTVPGETRSPFVTSGIRIGSPALTSRGMKEREFEFIANKIADVLDDINNTKLQESVKKELKELAQKFVIYNQSTY.

(6S)-5,6,7,8-tetrahydrofolate-binding positions include L117 and G121–L123. Position 225 is an N6-(pyridoxal phosphate)lysine (K225). S349–F351 is a binding site for (6S)-5,6,7,8-tetrahydrofolate.

It belongs to the SHMT family. As to quaternary structure, homodimer. It depends on pyridoxal 5'-phosphate as a cofactor.

It localises to the cytoplasm. It carries out the reaction (6R)-5,10-methylene-5,6,7,8-tetrahydrofolate + glycine + H2O = (6S)-5,6,7,8-tetrahydrofolate + L-serine. Its pathway is one-carbon metabolism; tetrahydrofolate interconversion. The protein operates within amino-acid biosynthesis; glycine biosynthesis; glycine from L-serine: step 1/1. Catalyzes the reversible interconversion of serine and glycine with tetrahydrofolate (THF) serving as the one-carbon carrier. This reaction serves as the major source of one-carbon groups required for the biosynthesis of purines, thymidylate, methionine, and other important biomolecules. Also exhibits THF-independent aldolase activity toward beta-hydroxyamino acids, producing glycine and aldehydes, via a retro-aldol mechanism. The polypeptide is Serine hydroxymethyltransferase 1 (Sulfurimonas denitrificans (strain ATCC 33889 / DSM 1251) (Thiomicrospira denitrificans (strain ATCC 33889 / DSM 1251))).